The chain runs to 429 residues: Probable M18 family aminopeptidase 2 (429 aa).

3 residues coordinate Zn(2+): histidine 82, histidine 156, and histidine 401.

Belongs to the peptidase M18 family. Zn(2+) serves as cofactor.

In Pseudomonas syringae pv. tomato (strain ATCC BAA-871 / DC3000), this protein is Probable M18 family aminopeptidase 2.